A 547-amino-acid polypeptide reads, in one-letter code: Putative cysteine ligase BshC (547 aa).

The stretch at 461-504 (ASTEATRSAIMDEMEALKQKVVRAEKRQQDEVRAQLKKAHTNLR) forms a coiled coil.

It belongs to the BshC family.

The sequence is that of Putative cysteine ligase BshC from Salinibacter ruber (strain DSM 13855 / M31).